Consider the following 316-residue polypeptide: Pantothenate kinase (316 aa).

95–102 (GSVAVGKS) provides a ligand contact to ATP.

This sequence belongs to the prokaryotic pantothenate kinase family.

The protein resides in the cytoplasm. The enzyme catalyses (R)-pantothenate + ATP = (R)-4'-phosphopantothenate + ADP + H(+). The protein operates within cofactor biosynthesis; coenzyme A biosynthesis; CoA from (R)-pantothenate: step 1/5. In Shewanella oneidensis (strain ATCC 700550 / JCM 31522 / CIP 106686 / LMG 19005 / NCIMB 14063 / MR-1), this protein is Pantothenate kinase.